Consider the following 346-residue polypeptide: Uroporphyrinogen decarboxylase (346 aa).

Substrate contacts are provided by residues 26 to 30 (RQAGR), Asp76, Tyr153, Ser208, and His323.

The protein belongs to the uroporphyrinogen decarboxylase family. In terms of assembly, homodimer.

The protein resides in the cytoplasm. It catalyses the reaction uroporphyrinogen III + 4 H(+) = coproporphyrinogen III + 4 CO2. Its pathway is porphyrin-containing compound metabolism; protoporphyrin-IX biosynthesis; coproporphyrinogen-III from 5-aminolevulinate: step 4/4. In terms of biological role, catalyzes the decarboxylation of four acetate groups of uroporphyrinogen-III to yield coproporphyrinogen-III. The chain is Uroporphyrinogen decarboxylase from Prochlorococcus marinus (strain MIT 9312).